Reading from the N-terminus, the 113-residue chain is U11-theraphotoxin-Hhn1q (113 aa).

Positions 1-21 are cleaved as a signal peptide; that stretch reads MNTVRVTFLLVFVLAVSLGQA. The propeptide occupies 22–74; it reads DKDENRMEMQEKTEQGKSYLDFAENLLLQKLEELEAKLLEEDSEESRNSRQKR. A disordered region spans residues 61–82; that stretch reads EEDSEESRNSRQKRCIGEGVPC. Disulfide bonds link Cys75-Cys90, Cys82-Cys95, and Cys89-Cys110.

The protein belongs to the neurotoxin 14 (magi-1) family. 01 (HNTX-16) subfamily. In terms of tissue distribution, expressed by the venom gland.

Its subcellular location is the secreted. In terms of biological role, probable ion channel inhibitor. The protein is U11-theraphotoxin-Hhn1q of Cyriopagopus hainanus (Chinese bird spider).